We begin with the raw amino-acid sequence, 60 residues long: Mastoparan-B (60 aa).

Residues 1-27 (MKNTILILFTAFIALLGFFGMSAEALA) form the signal peptide. AXPX repeat units lie at residues 27 to 30 (ADPL), 31 to 34 (AEPL), 35 to 38 (ADPN), and 41 to 44 (ADPE). Positions 28 to 45 (DPLAEPLADPNAEADPEA) are excised as a propeptide. Position 59 is a leucine amide (leucine 59).

It belongs to the MCD family. Mastoparan subfamily. As to expression, expressed by the venom gland.

It is found in the secreted. The protein localises to the target cell membrane. Antimicrobial and mast cell degranulating peptide. Has broad spectrum antibacterial activity against both Gram-positive (S.aureus MIC=96-128 ug/ml, S.xylosus MIC=2 ug/ml, S.alactolyticus MIC=32 ug/ml, and S.choleraesuis MIC=32 ug/ml) and Gram-negative bacteria (C.koseri MIC=6 ug/ml, E.coli MIC=3-16 ug/ml, K.pneumoniae MIC=128 ug/ml, P.aerugiosa MIC=128 ug/ml, S.typhimurium MIC=64 ug/ml, V.parahamelytics MIC=32 ug/ml, and S.enterica), as well as on fungi (C.albicans, C.glabrata, and C.neoformans). Does not show antimicrobial activity against S.mutans. Affects membrane permeability of E.coli. Also acts as a mast cell degranulating peptide, that causes liberation of histamine from rat peritoneal mast cells. Its mast cell degranulation activity may be related to the activation of G-protein coupled receptors in mast cells as well as interaction with other proteins located in cell endosomal membranes in the mast cells. Whether this peptide shows hemolytic activities is controversial, as Lin et al., 2011 and Ho et al., 1991 found a hemolytic activity on sheep, chicken and human erythrocytes, whereas Kim et al., 2016 found no hemolytic activity on human erythrocytes. In vivo, induces edema in the rat paw. The sequence is that of Mastoparan-B from Vespa basalis (Hornet).